The following is a 365-amino-acid chain: Ribosomal RNA large subunit methyltransferase F (365 aa).

A disordered region spans residues 1–50 (MSKPAVKSVPSATAKTATRAVNIRQKVKAPKQAKPEAKGRAKPSKDKPRA). The span at 33 to 50 (AKPEAKGRAKPSKDKPRA) shows a compositional bias: basic and acidic residues.

Belongs to the methyltransferase superfamily. METTL16/RlmF family.

It is found in the cytoplasm. The catalysed reaction is adenosine(1618) in 23S rRNA + S-adenosyl-L-methionine = N(6)-methyladenosine(1618) in 23S rRNA + S-adenosyl-L-homocysteine + H(+). Specifically methylates the adenine in position 1618 of 23S rRNA. This Shewanella baltica (strain OS155 / ATCC BAA-1091) protein is Ribosomal RNA large subunit methyltransferase F.